The sequence spans 626 residues: Basic helix-loop-helix ARNT-like protein 1 (626 aa).

The interval 1–60 (MADQRMDISSTISDFMSPGATDLLSSPLGTSGMDCNRKRKGSSTDYQESMDTDKDDPHGR) is disordered. Ser17 carries the phosphoserine; by GSK3-beta modification. The residue at position 21 (Thr21) is a Phosphothreonine; by GSK3-beta. The Nuclear localization signal signature appears at 36-41 (NRKRKG). A compositionally biased stretch (basic and acidic residues) spans 51–60 (DTDKDDPHGR). The region spanning 72-125 (NAREAHSQIEKRRRDKMNSFIDELASLVPTCNAMSRKLDKLTVLRMAVQHMKTL) is the bHLH domain. Ser78 bears the Phosphoserine mark. Ser90 carries the post-translational modification Phosphoserine; by CK2. The short motif at 142-152 (LSDDELKHLIL) is the Nuclear export signal 1 element. The 73-residue stretch at 143–215 (SDDELKHLIL…EQLSSSDTAP (73 aa)) folds into the PAS 1 domain. Residue Lys252 forms a Glycyl lysine isopeptide (Lys-Gly) (interchain with G-Cter in SUMO2 and SUMO3) linkage. A Glycyl lysine isopeptide (Lys-Gly) (interchain with G-Cter in SUMO); alternate cross-link involves residue Lys259. Lys259 participates in a covalent cross-link: Glycyl lysine isopeptide (Lys-Gly) (interchain with G-Cter in SUMO2); alternate. In terms of domain architecture, PAS 2 spans 326–396 (PQPVNGEIRV…ECHRQVLQTR (71 aa)). A Nuclear export signal 2 motif is present at residues 361-369 (LAYLPQELL). The 44-residue stretch at 401-444 (TNCYKFKIKDGSFITLRSRWFSFMNPWTKEVEYIVSTNTVVLAN) folds into the PAC domain. Disordered stretches follow at residues 457 to 493 (TASP…AGAG) and 510 to 597 (RGSS…SNDE). Residues 484–493 (IPGGTRAGAG) are compositionally biased toward gly residues. The interaction with CIART stretch occupies residues 508–588 (RIRGSSPSSC…IGIDMIDNDQ (81 aa)). Low complexity predominate over residues 511–521 (GSSPSSCGSSP). N6-acetyllysine is present on Lys538.

In terms of assembly, component of the circadian clock oscillator which includes the CRY1/2 proteins, CLOCK or NPAS2, BMAL1 or BMAL2, CSNK1D and/or CSNK1E, TIMELESS and the PER1/2/3 proteins. Forms a heterodimer with CLOCK. The CLOCK-BMAL1 heterodimer is required for E-box-dependent transactivation, for CLOCK nuclear translocation and degradation, and, for phosphorylation of both CLOCK and BMAL1. Part of a nuclear complex which also includes RACK1 and PRKCA; RACK1 and PRKCA are recruited to the complex in a circadian manner. Interacts with NPAS2. Interacts with EZH2. Interacts with SUMO3. Interacts with SIRT1. Interacts with AHR. Interacts with ID1, ID2 and ID3. Interacts with DDX4. Interacts with OGT. Interacts with EED and SUZ12. Interacts with MTA1. Interacts with CIART. Interacts with HSP90. Interacts with KAT2B and EP300. Interacts with BHLHE40/DEC1 and BHLHE41/DEC2. Interacts with RELB and the interaction is enhanced in the presence of CLOCK. Interacts with PER1, PER2, CRY1 and CRY2 and this interaction requires a translocation to the nucleus. Interaction of the CLOCK-BMAL1 heterodimer with PER or CRY inhibits transcription activation. Interaction of the CLOCK-BMAL1 with CRY1 is independent of DNA but with PER2 is off DNA. The CLOCK-BMAL1 heterodimer interacts with GSK3B. Interacts with KDM5A. Interacts with KMT2A; in a circadian manner. Interacts with UBE3A. Interacts with PRKCG. Interacts with MAGEL2. Interacts with NCOA2. Interacts with THRAP3. The CLOCK-BMAL1 heterodimer interacts with PASD1. Interacts with PASD1. Interacts with USP9X. Interacts with PIWIL2 (via PIWI domain). Interacts with HDAC3. Interacts with HNF4A. Post-translationally, ubiquitinated, leading to its proteasomal degradation. Deubiquitinated by USP9X. O-glycosylated; contains O-GlcNAc. O-glycosylation by OGT prevents protein degradation by inhibiting ubiquitination. It also stabilizes the CLOCK-BMAL1 heterodimer thereby increasing CLOCK-BMAL1-mediated transcription of genes in the negative loop of the circadian clock such as PER1/2/3 and CRY1/2. In terms of processing, acetylated on Lys-538 by CLOCK during the repression phase of the circadian cycle. Acetylation facilitates recruitment of CRY1 protein and initiates the repression phase of the circadian cycle. Acetylated at Lys-538 by KAT5 during the activation phase of the cycle, leading to recruitment of the positive transcription elongation factor b (P-TEFb) and BRD4, followed by productive elongation of circadian transcripts. Deacetylated by SIRT1, which may result in decreased protein stability. Post-translationally, phosphorylated upon dimerization with CLOCK. Phosphorylation enhances the transcriptional activity, alters the subcellular localization and decreases the stability of the CLOCK-BMAL1 heterodimer by promoting its degradation. Phosphorylation shows circadian variations in the liver with a peak between CT10 to CT14. Phosphorylation at Ser-90 by CK2 is essential for its nuclear localization, its interaction with CLOCK and controls CLOCK nuclear entry. Dephosphorylation at Ser-78 is important for dimerization with CLOCK and transcriptional activity. Sumoylated on Lys-259 upon dimerization with CLOCK. Predominantly conjugated to poly-SUMO2/3 rather than SUMO1 and the level of these conjugates undergo rhythmic variation, peaking at CT9-CT12. Sumoylation localizes it exclusively to the PML body and promotes its ubiquitination in the PML body, ubiquitin-dependent proteasomal degradation and the transcriptional activity of the CLOCK-BMAL1 heterodimer. In terms of processing, undergoes lysosome-mediated degradation in a time-dependent manner in the liver.

It is found in the nucleus. Its subcellular location is the cytoplasm. The protein resides in the PML body. In terms of biological role, transcriptional activator which forms a core component of the circadian clock. The circadian clock, an internal time-keeping system, regulates various physiological processes through the generation of approximately 24 hour circadian rhythms in gene expression, which are translated into rhythms in metabolism and behavior. It is derived from the Latin roots 'circa' (about) and 'diem' (day) and acts as an important regulator of a wide array of physiological functions including metabolism, sleep, body temperature, blood pressure, endocrine, immune, cardiovascular, and renal function. Consists of two major components: the central clock, residing in the suprachiasmatic nucleus (SCN) of the brain, and the peripheral clocks that are present in nearly every tissue and organ system. Both the central and peripheral clocks can be reset by environmental cues, also known as Zeitgebers (German for 'timegivers'). The predominant Zeitgeber for the central clock is light, which is sensed by retina and signals directly to the SCN. The central clock entrains the peripheral clocks through neuronal and hormonal signals, body temperature and feeding-related cues, aligning all clocks with the external light/dark cycle. Circadian rhythms allow an organism to achieve temporal homeostasis with its environment at the molecular level by regulating gene expression to create a peak of protein expression once every 24 hours to control when a particular physiological process is most active with respect to the solar day. Transcription and translation of core clock components (CLOCK, NPAS2, BMAL1, BMAL2, PER1, PER2, PER3, CRY1 and CRY2) plays a critical role in rhythm generation, whereas delays imposed by post-translational modifications (PTMs) are important for determining the period (tau) of the rhythms (tau refers to the period of a rhythm and is the length, in time, of one complete cycle). A diurnal rhythm is synchronized with the day/night cycle, while the ultradian and infradian rhythms have a period shorter and longer than 24 hours, respectively. Disruptions in the circadian rhythms contribute to the pathology of cardiovascular diseases, cancer, metabolic syndromes and aging. A transcription/translation feedback loop (TTFL) forms the core of the molecular circadian clock mechanism. Transcription factors, CLOCK or NPAS2 and BMAL1 or BMAL2, form the positive limb of the feedback loop, act in the form of a heterodimer and activate the transcription of core clock genes and clock-controlled genes (involved in key metabolic processes), harboring E-box elements (5'-CACGTG-3') within their promoters. The core clock genes: PER1/2/3 and CRY1/2 which are transcriptional repressors form the negative limb of the feedback loop and interact with the CLOCK|NPAS2-BMAL1|BMAL2 heterodimer inhibiting its activity and thereby negatively regulating their own expression. This heterodimer also activates nuclear receptors NR1D1, NR1D2, RORA, RORB and RORG, which form a second feedback loop and which activate and repress BMAL1 transcription, respectively. BMAL1 positively regulates myogenesis and negatively regulates adipogenesis via the transcriptional control of the genes of the canonical Wnt signaling pathway. Plays a role in normal pancreatic beta-cell function; regulates glucose-stimulated insulin secretion via the regulation of antioxidant genes NFE2L2/NRF2 and its targets SESN2, PRDX3, CCLC and CCLM. Negatively regulates the mTORC1 signaling pathway; regulates the expression of MTOR and DEPTOR. Controls diurnal oscillations of Ly6C inflammatory monocytes; rhythmic recruitment of the PRC2 complex imparts diurnal variation to chemokine expression that is necessary to sustain Ly6C monocyte rhythms. Regulates the expression of HSD3B2, STAR, PTGS2, CYP11A1, CYP19A1 and LHCGR in the ovary and also the genes involved in hair growth. Plays an important role in adult hippocampal neurogenesis by regulating the timely entry of neural stem/progenitor cells (NSPCs) into the cell cycle and the number of cell divisions that take place prior to cell-cycle exit. Regulates the circadian expression of CIART. The CLOCK-BMAL1 heterodimer regulates the circadian expression of SERPINE1/PAI1, VWF, B3, CCRN4L/NOC, NAMPT, DBP, MYOD1, PPARGC1A, PPARGC1B, SIRT1, GYS2, F7, NGFR, GNRHR, BHLHE40/DEC1, ATF4, MTA1 and also genes implicated in glucose and lipid metabolism. Promotes rhythmic chromatin opening, regulating the DNA accessibility of other transcription factors. The NPAS2-BMAL1 heterodimer positively regulates the expression of MAOA, F7 and LDHA and modulates the circadian rhythm of daytime contrast sensitivity by regulating the rhythmic expression of adenylate cyclase type 1 (ADCY1) in the retina. The preferred binding motif for the CLOCK-BMAL1 heterodimer is 5'-CACGTGA-3', which contains a flanking adenine nucleotide at the 3-prime end of the canonical 6-nucleotide E-box sequence. CLOCK specifically binds to the half-site 5'-CAC-3', while BMAL1 binds to the half-site 5'-GTGA-3'. The CLOCK-BMAL1 heterodimer also recognizes the non-canonical E-box motifs 5'-AACGTGA-3' and 5'-CATGTGA-3'. Essential for the rhythmic interaction of CLOCK with ASS1 and plays a critical role in positively regulating CLOCK-mediated acetylation of ASS1. Plays a role in protecting against lethal sepsis by limiting the expression of immune checkpoint protein CD274 in macrophages in a PKM2-dependent manner. Regulates the diurnal rhythms of skeletal muscle metabolism via transcriptional activation of genes promoting triglyceride synthesis (DGAT2) and metabolic efficiency (COQ10B). The sequence is that of Basic helix-loop-helix ARNT-like protein 1 (BMAL1) from Equus caballus (Horse).